The primary structure comprises 357 residues: GDSL esterase/lipase At5g45950 (357 aa).

Residues 1 to 23 (MLLVAFVTLLVAVALQPLPSVLS) form the signal peptide. Asn37 carries N-linked (GlcNAc...) asparagine glycosylation. Ser47 functions as the Nucleophile in the catalytic mechanism. The N-linked (GlcNAc...) asparagine glycan is linked to Asn132. Catalysis depends on residues Asp331 and His334.

Belongs to the 'GDSL' lipolytic enzyme family.

Its subcellular location is the secreted. The sequence is that of GDSL esterase/lipase At5g45950 from Arabidopsis thaliana (Mouse-ear cress).